Consider the following 413-residue polypeptide: MEKHSGFVRFITRGSLVGQILVGLVLGIALASFSQSGAIAAGLLGTLFVSALKAVAPVLVFILVAASIANHRQGQKTNMRPIVLLYLLGTFAAALVAVVVSFAFPSQLALVSHTNDITPPGGIVEVLQSLLMNVVDNPFHALASGNFIGILAWAIGLGVALRHASDTTKRVVGDLSYGVTFIVRVVIRFAPLGIFGLVSSTLAETGFDALWGYAHLLMVLIGAMLLVALVLNPLIVFWKIRRNPYPLVFTCLRESGLTAFFTRSSAANIPVNMELCKKLGLNEDTYAVSIPLGATINMAGAAITITVLTLAAAHTLEISVDLPTALLLSLVAAVCACGASGVAGGSLLLIPLACSLFGISSDIAMQVVAVGFIIGVLQDSCETALNSSTDVLFTATACVAAEESTGDSAAELG.

Transmembrane regions (helical) follow at residues 14 to 34 (GSLV…ASFS), 44 to 64 (LGTL…FILV), 82 to 102 (IVLL…VVSF), 141 to 161 (ALAS…GVAL), 178 to 198 (GVTF…FGLV), 217 to 237 (LMVL…LIVF), 290 to 310 (IPLG…VLTL), 330 to 350 (LVAA…LLLI), and 356 to 376 (LFGI…IIGV).

It belongs to the dicarboxylate/amino acid:cation symporter (DAACS) (TC 2.A.23) family.

It is found in the cell inner membrane. It carries out the reaction L-serine(in) + Na(+)(in) = L-serine(out) + Na(+)(out). The enzyme catalyses L-threonine(in) + Na(+)(in) = L-threonine(out) + Na(+)(out). Involved in the import of serine and threonine into the cell, with the concomitant import of sodium (symport system). The protein is Serine/threonine transporter SstT of Edwardsiella ictaluri (strain 93-146).